A 199-amino-acid chain; its full sequence is Prolactin (199 aa).

Residues cysteine 4 and cysteine 11 are joined by a disulfide bond. Phosphoserine is present on serine 26. Asparagine 31 is a glycosylation site (N-linked (GlcNAc...) asparagine; partial). 2 positions are modified to phosphoserine: serine 34 and serine 90. 2 cysteine pairs are disulfide-bonded: cysteine 58–cysteine 174 and cysteine 191–cysteine 199.

This sequence belongs to the somatotropin/prolactin family. As to quaternary structure, interacts with PRLR.

The protein localises to the secreted. In terms of biological role, prolactin acts primarily on the mammary gland by promoting lactation. The protein is Prolactin (PRL) of Camelus dromedarius (Dromedary).